The following is a 410-amino-acid chain: Proteasome-activating nucleotidase (410 aa).

Residues 1–70 (MENNSQNVLK…LRGEIERFRT (70 aa)) adopt a coiled-coil conformation. Residues 195-200 (GTGKTL) and H334 contribute to the ATP site. Positions 408–410 (MFG) are docks into pockets in the proteasome alpha-ring to cause gate opening.

This sequence belongs to the AAA ATPase family. In terms of assembly, homohexamer. The hexameric complex has a two-ring architecture resembling a top hat that caps the 20S proteasome core at one or both ends. Upon ATP-binding, the C-terminus of PAN interacts with the alpha-rings of the proteasome core by binding to the intersubunit pockets.

It localises to the cytoplasm. In terms of biological role, ATPase which is responsible for recognizing, binding, unfolding and translocation of substrate proteins into the archaeal 20S proteasome core particle. Is essential for opening the gate of the 20S proteasome via an interaction with its C-terminus, thereby allowing substrate entry and access to the site of proteolysis. Thus, the C-termini of the proteasomal ATPase function like a 'key in a lock' to induce gate opening and therefore regulate proteolysis. Unfolding activity requires energy from ATP hydrolysis, whereas ATP binding alone promotes ATPase-20S proteasome association which triggers gate opening, and supports translocation of unfolded substrates. This is Proteasome-activating nucleotidase from Methanothermobacter thermautotrophicus (strain ATCC 29096 / DSM 1053 / JCM 10044 / NBRC 100330 / Delta H) (Methanobacterium thermoautotrophicum).